The chain runs to 129 residues: Large ribosomal subunit protein bL20 (129 aa).

This sequence belongs to the bacterial ribosomal protein bL20 family.

Its function is as follows. Binds directly to 23S ribosomal RNA and is necessary for the in vitro assembly process of the 50S ribosomal subunit. It is not involved in the protein synthesizing functions of that subunit. This chain is Large ribosomal subunit protein bL20, found in Mycobacterium sp. (strain JLS).